The primary structure comprises 631 residues: Phosphomethylpyrimidine synthase (631 aa).

Residues Asn-239, Met-268, Tyr-297, His-333, 353 to 355, 394 to 397, and Glu-433 contribute to the substrate site; these read SRG and DGLR. His-437 lines the Zn(2+) pocket. Tyr-460 contacts substrate. Residue His-501 coordinates Zn(2+). Positions 581, 584, and 589 each coordinate [4Fe-4S] cluster.

Belongs to the ThiC family. Homodimer. [4Fe-4S] cluster is required as a cofactor.

It carries out the reaction 5-amino-1-(5-phospho-beta-D-ribosyl)imidazole + S-adenosyl-L-methionine = 4-amino-2-methyl-5-(phosphooxymethyl)pyrimidine + CO + 5'-deoxyadenosine + formate + L-methionine + 3 H(+). It participates in cofactor biosynthesis; thiamine diphosphate biosynthesis. In terms of biological role, catalyzes the synthesis of the hydroxymethylpyrimidine phosphate (HMP-P) moiety of thiamine from aminoimidazole ribotide (AIR) in a radical S-adenosyl-L-methionine (SAM)-dependent reaction. The polypeptide is Phosphomethylpyrimidine synthase (Escherichia coli (strain SMS-3-5 / SECEC)).